The primary structure comprises 205 residues: Small ribosomal subunit protein uS4 (205 aa).

The interval 18 to 46 (NIWGRPKSPVNSRAYGPGQHGQRRKSKVS) is disordered. An S4 RNA-binding domain is found at 94–155 (SRLDAVVYRA…RSRNMALVLE (62 aa)).

This sequence belongs to the universal ribosomal protein uS4 family. Part of the 30S ribosomal subunit. Contacts protein S5. The interaction surface between S4 and S5 is involved in control of translational fidelity.

One of the primary rRNA binding proteins, it binds directly to 16S rRNA where it nucleates assembly of the body of the 30S subunit. Its function is as follows. With S5 and S12 plays an important role in translational accuracy. The chain is Small ribosomal subunit protein uS4 from Phenylobacterium zucineum (strain HLK1).